We begin with the raw amino-acid sequence, 383 residues long: Cobalt-precorrin-5B C(1)-methyltransferase (383 aa).

The protein belongs to the CbiD family.

It carries out the reaction Co-precorrin-5B + S-adenosyl-L-methionine = Co-precorrin-6A + S-adenosyl-L-homocysteine. The protein operates within cofactor biosynthesis; adenosylcobalamin biosynthesis; cob(II)yrinate a,c-diamide from sirohydrochlorin (anaerobic route): step 6/10. Catalyzes the methylation of C-1 in cobalt-precorrin-5B to form cobalt-precorrin-6A. The sequence is that of Cobalt-precorrin-5B C(1)-methyltransferase from Prochlorococcus marinus (strain MIT 9313).